We begin with the raw amino-acid sequence, 502 residues long: Glycogen synthase (502 aa).

Lysine 24 is a binding site for ADP-alpha-D-glucose.

The protein belongs to the glycosyltransferase 1 family. Bacterial/plant glycogen synthase subfamily.

The enzyme catalyses [(1-&gt;4)-alpha-D-glucosyl](n) + ADP-alpha-D-glucose = [(1-&gt;4)-alpha-D-glucosyl](n+1) + ADP + H(+). The protein operates within glycan biosynthesis; glycogen biosynthesis. In terms of biological role, synthesizes alpha-1,4-glucan chains using ADP-glucose. The chain is Glycogen synthase from Nitrosomonas eutropha (strain DSM 101675 / C91 / Nm57).